An 838-amino-acid polypeptide reads, in one-letter code: MEYHEAVNFLFDLRRFQVKPGTESIRRLLSHLGDPHEGVSFVQVAGSNGKGSTARMVDAMLRESGAHVGLYTSPHFDDVRERVRVDGRKIPKSALSAFVAEAKPYLVERAADGEPLTFFETVTALALWYFDRAGVDVAVLEVGMGGELDATSAVDPVASAVTNVSLEHTAVLGDTVAEIAKTKAAVAPADAPLVTGTTGEALSVIREEAGDVLTVGDADADSDADVRVSYGGRVNHQEAAVTVETDAETLDVRIPLLGAYQARNAGIAVSLARQVRPDIDAEAIHRGLRNAHWPGRFEVMGTEPTVVLDGAHNPDACAQVATVLDEFDYDDLHLVYGAMHDKDHGEMVGALPEVASVVTCKADISRGEDPEILSSVFERLNGPAVETGGAVAAALDRARARADPDDCVLVVGSLYVVAEARTTWTRAVVPKTHRTLDDARRTLDRANVADAAERSERARRAVNRTVHTRVQRRQARVLREELLSVGGDCAVSGHEFGGELVDVVLTGTLDQFERLTAALEDPPYALAGVAAEIRETLDIEAADAGEDDERGAGDASDAGHDDYPWNDGTAVMGILNVTPNSFHDGGEFYDIDDAVEQARAMVDAGVDIIDVGGESTRPGADEVPVDEEIRRVAPVIEAIADLDVLVSVDTRKAAVGAAALDAGADILNDVTGLEDPEMRFLAAERGAPVIVMHSIDAPVDPSREVDYDDVVEDVIDELTELVLLAEKAGIPRRNLIVDPGLGFGKSKAENFELLGRTDEFAALGCPILVGHSHKSMFSLVGEEPGDNLAATVAGTAIAADRGADIVRVHDVPENVAAVNVALASRDPNRFEADAERED.

Residues 1–418 (MEYHEAVNFL…LVVGSLYVVA (418 aa)) form a folylpolyglutamate synthase region. 46–52 (GSNGKGS) contributes to the ATP binding site. The tract at residues 541–561 (AADAGEDDERGAGDASDAGHD) is disordered. In terms of domain architecture, Pterin-binding spans 569–819 (TAVMGILNVT…DVPENVAAVN (251 aa)). The interval 571-838 (VMGILNVTPN…RFEADAERED (268 aa)) is DHPS. Asparagine 576 is a binding site for Mg(2+). (7,8-dihydropterin-6-yl)methyl diphosphate-binding positions include threonine 616, aspartate 649, asparagine 668, aspartate 738, lysine 774, and 807–809 (RVH).

It in the N-terminal section; belongs to the folylpolyglutamate synthase family. In the C-terminal section; belongs to the DHPS family. The cofactor is Mg(2+).

The catalysed reaction is (6S)-5,6,7,8-tetrahydrofolyl-(gamma-L-Glu)(n) + L-glutamate + ATP = (6S)-5,6,7,8-tetrahydrofolyl-(gamma-L-Glu)(n+1) + ADP + phosphate + H(+). It carries out the reaction (7,8-dihydropterin-6-yl)methyl diphosphate + 4-aminobenzoate = 7,8-dihydropteroate + diphosphate. It functions in the pathway cofactor biosynthesis; tetrahydrofolylpolyglutamate biosynthesis. Its pathway is cofactor biosynthesis; tetrahydrofolate biosynthesis; 7,8-dihydrofolate from 2-amino-4-hydroxy-6-hydroxymethyl-7,8-dihydropteridine diphosphate and 4-aminobenzoate: step 1/2. Its function is as follows. Can complement an H.volcanii mutant strain that is thymidine auxotroph because it lacks the two dihydrofolate reductase genes encoded by hdrA and hdrB. This Haloferax volcanii (strain ATCC 29605 / DSM 3757 / JCM 8879 / NBRC 14742 / NCIMB 2012 / VKM B-1768 / DS2) (Halobacterium volcanii) protein is Probable bifunctional folylpolyglutamate synthase/dihydropteroate synthase (folCP).